A 156-amino-acid chain; its full sequence is Transcription antitermination protein NusB (156 aa).

The protein belongs to the NusB family.

Its function is as follows. Involved in transcription antitermination. Required for transcription of ribosomal RNA (rRNA) genes. Binds specifically to the boxA antiterminator sequence of the ribosomal RNA (rrn) operons. In Syntrophotalea carbinolica (strain DSM 2380 / NBRC 103641 / GraBd1) (Pelobacter carbinolicus), this protein is Transcription antitermination protein NusB.